The chain runs to 210 residues: Ribonuclease HII (210 aa).

The RNase H type-2 domain occupies 18–208 (YPVAGIDEAG…VNDIISQTKL (191 aa)). Positions 24, 25, and 116 each coordinate a divalent metal cation.

This sequence belongs to the RNase HII family. Mn(2+) serves as cofactor. It depends on Mg(2+) as a cofactor.

It is found in the cytoplasm. The catalysed reaction is Endonucleolytic cleavage to 5'-phosphomonoester.. In terms of biological role, endonuclease that specifically degrades the RNA of RNA-DNA hybrids. In Endomicrobium trichonymphae, this protein is Ribonuclease HII.